We begin with the raw amino-acid sequence, 479 residues long: MLWVEKYRPKTLEEVVADKSIITRVIKWAKSWKRGSKPLLLAGPPGVGKTSLALALANTMGWEAVELNASDQRSWRVIERIVGEGAFNETISDEGEFLSSRIGKLKLIILDEVDNIHKKEDVGGEAALIRLIKRKPAQPLILIANDPYKLSPELRNLCEMINFKRLTKQQVARVLERIALKEGIKVDKSVLLKIAENAGGDLRAAINDFQALAEGKEELKPEDVFLTKRTQEKDIFRVMQMIFKTKNPAVYNEAMLLDESPEDVIHWVDENLPLEYSGVELVNAYEALSRADIFLGRVRRRQFYRLWKYASYLMTVGVQQMKEEPKKGFTRYRRPAVWQMLFQLRQKREMTRKILEKIGKYSHLSMRKARTEMFPVIKLLLKELDVDKAATIAAFYEFTKEELEFLVGEKGDEIWKYVEKHGMHRIEDETFLESFVKAEKEEKEESVEEVAEEKPEEEREEPRARKKAGKNLTLDSFFS.

43–50 (GPPGVGKT) contacts ATP. A disordered region spans residues 441 to 479 (EEKEESVEEVAEEKPEEEREEPRARKKAGKNLTLDSFFS). The span at 452–463 (EEKPEEEREEPR) shows a compositional bias: basic and acidic residues.

The protein belongs to the activator 1 small subunits family. RfcL subfamily. As to quaternary structure, heteropentamer composed of four small subunits (RfcS) and one large subunit (RfcL). Both subunits interact with PCNA.

Functionally, part of the RFC clamp loader complex which loads the PCNA sliding clamp onto DNA. The complex possesses DNA-dependent ATPase activity which is further stimulated by PCNA. The sequence is that of Replication factor C large subunit (rfcL) from Archaeoglobus fulgidus (strain ATCC 49558 / DSM 4304 / JCM 9628 / NBRC 100126 / VC-16).